Consider the following 52-residue polypeptide: uncharacterized protein (52 aa).

The helical transmembrane segment at 7–27 threads the bilayer; the sequence is MFQLFVFIIFAAVVFAAVTGF.

Its subcellular location is the membrane. This is an uncharacterized protein from Bacillus subtilis (strain 168).